The following is a 199-amino-acid chain: Putative AgrB-like protein (199 aa).

5 consecutive transmembrane segments (helical) span residues 43–63 (IIIF…FSFI), 81–101 (YGCL…TRLF), 108–128 (FYIV…PCPN), 139–159 (LKIL…LSPL), and 165–185 (ILIS…KGVI).

The protein belongs to the AgrB family.

The protein resides in the cell membrane. In terms of biological role, may be involved in the proteolytic processing of a quorum sensing system signal molecule precursor. This is Putative AgrB-like protein (cfg02) from Clostridium beijerinckii (Clostridium MP).